The sequence spans 1252 residues: Guanine nucleotide exchange factor SDC25 (1252 aa).

An SH3 domain is found at Q26–N97. Disordered stretches follow at residues I409–W454 and L623–E648. Over residues T416 to S428 the composition is skewed to low complexity. Residues S782–K914 form the N-terminal Ras-GEF domain. A Ras-GEF domain is found at D952–K1199. The interval R1201–K1252 is disordered. A compositionally biased stretch (basic and acidic residues) spans S1214–S1236. The segment covering Q1239 to K1252 has biased composition (basic residues).

In terms of biological role, promotes the exchange of Ras-bound GDP by GTP. In Saccharomyces cerevisiae (strain RM11-1a) (Baker's yeast), this protein is Guanine nucleotide exchange factor SDC25 (SDC25).